Here is a 668-residue protein sequence, read N- to C-terminus: Auxilin-like clathrin uncoating factor SWA2 (668 aa).

Residues 1-95 (MSDPFAHLLT…ANNTPPSALA (95 aa)) are disordered. Positions 1 to 100 (MSDPFAHLLT…PSALANTDDD (100 aa)) are CB1. Polar residues predominate over residues 17-36 (SASASKETTPQSSNSPSITG). 2 positions are modified to phosphoserine: Ser-52 and Ser-64. The segment covering 76-92 (PTNSTTKSNTANNTPPS) has biased composition (low complexity). Residues 140 to 180 (DEVKDMEIARLMSLGLSIEEATEFYENDVTYERYLEILKSK) enclose the UBA domain. Residues 238–302 (EANDRLNNYS…FETKIDITKR (65 aa)) form a CB2 region. Residues Ser-264, Ser-308, and Ser-312 each carry the phosphoserine modification. Disordered stretches follow at residues 302–323 (RTAP…EENS) and 339–359 (EGNL…ENSN). The interval 303–362 (TAPDVSHSSSPTSGILIEENSRRNEPLIEDSLLDFSEGNLTNSKSNEDSTLFNENSNTDS) is CB3. The segment covering 340–359 (GNLTNSKSNEDSTLFNENSN) has biased composition (polar residues). TPR repeat units lie at residues 374–407 (YNEF…LPLN), 412–445 (IIAL…FPSS), and 467–500 (PKIM…NFFD). A disordered region spans residues 511 to 556 (QDFINPPPVKKSMPVKKKTTTTSPATKKQNLTASSSNSPISVDSTS). The span at 539–555 (QNLTASSSNSPISVDST) shows a compositional bias: polar residues. The J domain occupies 603 to 668 (CNWKDVSMQD…DKFKLQNDIN (66 aa)).

As to quaternary structure, interacts with the clathrin light and heavy chains CLC1 and CHC1, respectively. Binds to clathrin with its N-terminal domain containing 3 clathrin-binding (CB) motifs. Association with clathrin is transient. Binds to polyubiquitin and ubiquitinated proteins.

The protein localises to the cytoplasm. The protein resides in the endoplasmic reticulum membrane. Its function is as follows. Cofactor for the uncoating of clathrin-coated vesicles (CCVs) by Hsp70-type chaperones (SSA1/2/3 and SSB1/2). Coat disassembly is important for fusion of vesicles with target membranes and for recycling components of clathrin coats to the cytoplasm for further rounds of vesicle formation. Binds to assembled clathrin and recruits the ATP-activated chaperone to CCVs. Stimulates the ATPase activity of the clathrin-associated Hsp70-type chaperone SSA1, which then disrupts clathrin-clathrin interactions, leading to release of the clathrin coat. In addition, prevents unproductive clathrin assembly in the cell. Also required for cortical endoplasmic reticulum inheritance. The sequence is that of Auxilin-like clathrin uncoating factor SWA2 (SWA2) from Saccharomyces cerevisiae (strain ATCC 204508 / S288c) (Baker's yeast).